A 321-amino-acid chain; its full sequence is Porin Omp2a (321 aa).

A signal peptide spans 1–22; sequence MNIKSLLLGSAAALVAASGAQA.

It belongs to the alphaproteobacteria porin family. In terms of assembly, monomer.

The protein localises to the cell outer membrane. Functionally, forms passive diffusion pores that allow small molecular weight hydrophilic materials across the outer membrane. In Brucella abortus (strain S19), this protein is Porin Omp2a (omp2a).